The following is a 516-amino-acid chain: Bifunctional purine biosynthesis protein PurH (516 aa).

The region spanning 1–150 (MSDDRKQIKR…KNHPSVAVVV (150 aa)) is the MGS-like domain.

The protein belongs to the PurH family.

The catalysed reaction is (6R)-10-formyltetrahydrofolate + 5-amino-1-(5-phospho-beta-D-ribosyl)imidazole-4-carboxamide = 5-formamido-1-(5-phospho-D-ribosyl)imidazole-4-carboxamide + (6S)-5,6,7,8-tetrahydrofolate. The enzyme catalyses IMP + H2O = 5-formamido-1-(5-phospho-D-ribosyl)imidazole-4-carboxamide. It participates in purine metabolism; IMP biosynthesis via de novo pathway; 5-formamido-1-(5-phospho-D-ribosyl)imidazole-4-carboxamide from 5-amino-1-(5-phospho-D-ribosyl)imidazole-4-carboxamide (10-formyl THF route): step 1/1. It functions in the pathway purine metabolism; IMP biosynthesis via de novo pathway; IMP from 5-formamido-1-(5-phospho-D-ribosyl)imidazole-4-carboxamide: step 1/1. This chain is Bifunctional purine biosynthesis protein PurH, found in Corynebacterium ammoniagenes (Brevibacterium ammoniagenes).